The following is a 368-amino-acid chain: 3-dehydroquinate synthase (368 aa).

Residues 76-81 (DGEQYK), 110-114 (GVIGD), 134-135 (TT), Lys-147, Lys-156, and 174-177 (CLKT) each bind NAD(+). Residues Glu-189, His-252, and His-269 each coordinate Zn(2+).

The protein belongs to the sugar phosphate cyclases superfamily. Dehydroquinate synthase family. The cofactor is NAD(+). Requires Co(2+) as cofactor. Zn(2+) is required as a cofactor.

The protein resides in the cytoplasm. It catalyses the reaction 7-phospho-2-dehydro-3-deoxy-D-arabino-heptonate = 3-dehydroquinate + phosphate. The protein operates within metabolic intermediate biosynthesis; chorismate biosynthesis; chorismate from D-erythrose 4-phosphate and phosphoenolpyruvate: step 2/7. Catalyzes the conversion of 3-deoxy-D-arabino-heptulosonate 7-phosphate (DAHP) to dehydroquinate (DHQ). The protein is 3-dehydroquinate synthase of Vibrio vulnificus (strain YJ016).